The following is a 631-amino-acid chain: E3 ubiquitin-protein ligase Zswim2 (631 aa).

The segment at 54–87 (FRVLLGNPHECSCPTFLKRGELCKHICWVLLKKF) adopts an SWIM-type zinc-finger fold. Positions 139–348 (KDINAGDICP…APGYQCRLCL (210 aa)) are UBE2D1-binding. The RING-type 1 zinc-finger motif lies at 147–199 (CPICQEVLLEKKLPVTFCRFGCGNNVHIKCMRILANYQDTGSDSSVLRCPLCR). Residues 230-281 (HLGIPCNNCNQLPIEGRCYKCTECVEYHLCQECFDSCCHSSHAFASREKRNQ) form a ZZ-type zinc finger. Zn(2+) contacts are provided by Cys-235, Cys-238, Cys-250, Cys-253, Cys-259, Cys-262, His-268, and His-271. The segment at 344-386 (CRLCLKSFSFGQYTRLLPCTHKFHRKCIDNWLLHKCNSCPIDR) adopts an RING-type 2 zinc-finger fold. Residues 589–614 (SKRQNNSMGKVRQKLGHPPRRPAYPP) form a disordered region. Residues 599–608 (VRQKLGHPPR) show a composition bias toward basic residues.

As to quaternary structure, dimer. Interacts with UBE2D1. Post-translationally, polyubiquitinated. Polyubiquitination is followed by degradation via the proteasome. Expressed only in testis.

It catalyses the reaction S-ubiquitinyl-[E2 ubiquitin-conjugating enzyme]-L-cysteine + [acceptor protein]-L-lysine = [E2 ubiquitin-conjugating enzyme]-L-cysteine + N(6)-ubiquitinyl-[acceptor protein]-L-lysine.. Functionally, E3 ubiquitin-protein ligase involved in the regulation of Fas-, DR3- and DR4-mediated apoptosis. Functions in conjunction with the UBE2D1, UBE2D3 and UBE2E1 E2 ubiquitin-conjugating enzymes. This Mus musculus (Mouse) protein is E3 ubiquitin-protein ligase Zswim2 (Zswim2).